A 187-amino-acid chain; its full sequence is MAQTQLPHDAKAGPTKPEVRAVVRSKLALTDDDHFVEVGSCTGAVTIAAARDAGRVTALERKADRLETTRKNLAANGLADAVELRNAEAPAELPADADALFIGGSRNYDAVLDHAAETGVDRIVMNVSRLEVAGAATQAFRDRDILTEVVQFQVSHGYELAGATSFDSENPVYMLVGSASGDTEADR.

Residues T15, G39–G43, E60, and A89 each bind S-adenosyl-L-methionine.

Belongs to the methyltransferase superfamily. Archaeal-type CbiT family.

The catalysed reaction is Co-precorrin-6B + S-adenosyl-L-methionine = Co-precorrin-7 + S-adenosyl-L-homocysteine + CO2. It participates in cofactor biosynthesis; adenosylcobalamin biosynthesis; cob(II)yrinate a,c-diamide from sirohydrochlorin (anaerobic route): step 8/10. In terms of biological role, catalyzes the methylation of C-15 in cobalt-precorrin-6B followed by the decarboxylation of C-12 to form cobalt-precorrin-7. This is Probable cobalt-precorrin-6B C(15)-methyltransferase (decarboxylating) from Halobacterium salinarum (strain ATCC 700922 / JCM 11081 / NRC-1) (Halobacterium halobium).